We begin with the raw amino-acid sequence, 209 residues long: Large ribosomal subunit protein uL3 (209 aa).

Belongs to the universal ribosomal protein uL3 family. Part of the 50S ribosomal subunit. Forms a cluster with proteins L14 and L19.

Functionally, one of the primary rRNA binding proteins, it binds directly near the 3'-end of the 23S rRNA, where it nucleates assembly of the 50S subunit. This chain is Large ribosomal subunit protein uL3, found in Oceanobacillus iheyensis (strain DSM 14371 / CIP 107618 / JCM 11309 / KCTC 3954 / HTE831).